A 332-amino-acid chain; its full sequence is Oxygen-dependent coproporphyrinogen-III oxidase (332 aa).

Ser119 contacts coproporphyrinogen III. Residue His133 is the Proton donor of the active site. Coproporphyrinogen III contacts are provided by residues 135 to 137 (NVR) and 284 to 285 (GR).

The protein belongs to the aerobic coproporphyrinogen-III oxidase family. In terms of assembly, homodimer.

It catalyses the reaction coproporphyrinogen III + O2 + 2 H(+) = protoporphyrinogen IX + 2 CO2 + 2 H2O. Its pathway is porphyrin-containing compound metabolism; protoporphyrin-IX biosynthesis; protoporphyrinogen-IX from coproporphyrinogen-III (O2 route): step 1/1. Functionally, involved in the heme biosynthesis. Catalyzes the aerobic oxidative decarboxylation of propionate groups of rings A and B of coproporphyrinogen-III to yield the vinyl groups in protoporphyrinogen-IX. In Dictyostelium discoideum (Social amoeba), this protein is Oxygen-dependent coproporphyrinogen-III oxidase (cpox).